The following is a 447-amino-acid chain: Na(+)-translocating NADH-quinone reductase subunit A (447 aa).

This sequence belongs to the NqrA family. As to quaternary structure, composed of six subunits; NqrA, NqrB, NqrC, NqrD, NqrE and NqrF.

The enzyme catalyses a ubiquinone + n Na(+)(in) + NADH + H(+) = a ubiquinol + n Na(+)(out) + NAD(+). Functionally, NQR complex catalyzes the reduction of ubiquinone-1 to ubiquinol by two successive reactions, coupled with the transport of Na(+) ions from the cytoplasm to the periplasm. NqrA to NqrE are probably involved in the second step, the conversion of ubisemiquinone to ubiquinol. This Yersinia pestis protein is Na(+)-translocating NADH-quinone reductase subunit A.